The primary structure comprises 208 residues: Superoxide dismutase [Mn] (208 aa).

Mn(2+)-binding residues include His27, His81, Asp168, and His172.

It belongs to the iron/manganese superoxide dismutase family. Homodimer. The cofactor is Mn(2+).

It carries out the reaction 2 superoxide + 2 H(+) = H2O2 + O2. Its function is as follows. Destroys superoxide anion radicals which are normally produced within the cells and which are toxic to biological systems. The protein is Superoxide dismutase [Mn] (sodA) of Buchnera aphidicola subsp. Baizongia pistaciae (strain Bp).